A 773-amino-acid chain; its full sequence is Mitogen-activated protein kinase kinase kinase 9 (773 aa).

A compositionally biased stretch (basic and acidic residues) spans 1–14 (MKKSSDKSPVRQHD). The segment at 1 to 35 (MKKSSDKSPVRQHDTATQINSDAVSSSTSFTDSDS) is disordered. Residues 21 to 35 (SDAVSSSTSFTDSDS) show a composition bias toward low complexity. Residues Ser79 and Ser150 each carry the phosphoserine modification. The interval 100–493 (FDKILALMKK…VSNTSPICVS (394 aa)) is regulatory region. Ser365 is subject to Phosphoserine; by MAPK4. The disordered stretch occupies residues 426-455 (EIVRRPSSSSSSENGCDEEEAEDDKVEKEE). Acidic residues predominate over residues 440–449 (GCDEEEAEDD). The region spanning 501 to 755 (WQKGQLLRQG…ATELLNHPFV (255 aa)) is the Protein kinase domain. ATP-binding positions include 507–515 (LRQGSFGSV) and Lys529. Residue Asp624 is the Proton acceptor of the active site. Residue Ser768 is modified to Phosphoserine.

This sequence belongs to the protein kinase superfamily. STE Ser/Thr protein kinase family. MAP kinase kinase kinase subfamily. In terms of assembly, interacts with MPK4. In terms of processing, phosphorylated by MPK4 upon treatment with flg22. Expressed at least in rosette leaves (at protein level).

It catalyses the reaction L-seryl-[protein] + ATP = O-phospho-L-seryl-[protein] + ADP + H(+). The catalysed reaction is L-threonyl-[protein] + ATP = O-phospho-L-threonyl-[protein] + ADP + H(+). Its function is as follows. Triggers SUMM2-mediated immune responses, including cell death and defense responses. Probably inhibited by the MEKK1-MKK1/ MKK2-MPK4 kinase cascade to adjust plant defense. Seems to contribute in transducing external glutamate (L-Glu) signal that elicits large-scale changes in root architecture. The sequence is that of Mitogen-activated protein kinase kinase kinase 9 from Arabidopsis thaliana (Mouse-ear cress).